A 266-amino-acid chain; its full sequence is Gasdermin bGSDM (266 aa).

C3 carries the S-palmitoyl cysteine lipid modification. The next 4 beta stranded transmembrane spans lie at 69–85 (ISGQ…GLSI), 97–115 (KLGL…FEFQ), 163–180 (KFTI…ELTI), and 189–205 (GNVK…KICY).

Belongs to the bacterial gasdermin family. As to quaternary structure, monomer. Forms large, homooligomeric ring-shaped pores when inserted in membranes. In terms of processing, palmitoylation helps stabilize the inactive state; may self palmitoylate. Palmitoylation plays a significant role in pore formation.

Its subcellular location is the cytoplasm. It localises to the cell inner membrane. With respect to regulation, the full-length protein before cleavage is inactive: intramolecular interactions between the N-terminal domain and the C-terminal region as well as the lipid modification, mediate autoinhibition. The pyroptosis-like-inducing activity is carried by the released N-terminal domain (Gasdermin bGSDM, N-terminus). Precursor of a pore-forming protein involved in defense against bacteriophages. Expression of bGSDM and the neighboring protease gene (Ga0182885_104520) is toxic in E.coli. Cleavage of this precursor by its dedicated protease releases the active moiety (gasdermin bGSDM, N-terminus) which inserts into membranes, forming pores and triggering cell death. Its function is as follows. Pore-forming protein that causes membrane permeabilization via a pyroptosis-like activity. Makes ring-like pores when released. This is Gasdermin bGSDM from Desulfuromonadales bacterium.